The following is a 529-amino-acid chain: Cytochrome P450 monooxygenase atmQ (529 aa).

The next 2 membrane-spanning stretches (helical) occupy residues 22 to 42 and 51 to 71; these read YPFAAPTWVYLVGAILIQQLA and SWVNVPVVGGHGIIGSWIAAF. Cys-467 serves as a coordination point for heme.

The protein belongs to the cytochrome P450 family. Heme is required as a cofactor.

Its subcellular location is the membrane. It functions in the pathway secondary metabolite biosynthesis. Its function is as follows. Cytochrome P450 monooxygenase; part of the ATM2 gene cluster that mediates the biosynthesis of aflatrem, a tremorgenic mycotoxin with acute neurotoxic effects. Synthesis of geranylgeranyl diphosphate (GGPP) by AtmG (a GGPP synthase) precedes condensation of GGPP with indole 3-glycerol phosphate, followed by epoxidation and cyclization by AtmM (a FAD-dependent monooxygenase) and AtmC (a prenyltransferase) to produce paspaline. AtmB is also essential for paspaline production, but its exact role has not been identified yet. AtmP, a cytochrome P450 monooxygenase, subsequently converts paspaline to 13-desoxypaxilline via PC-M6 by removal of the C-30 methyl group and oxidation at C-10. AtmQ, a cytochrome P450 monooxygenase, then catalyzes the oxidation of 13-desoxypaxilline, first at C-7 to produce paspalicine and then at C-13 to form paspalinine. Finally, AtmD prenylates paspalinine to form aflatrem. In Aspergillus flavus, this protein is Cytochrome P450 monooxygenase atmQ.